Here is a 1173-residue protein sequence, read N- to C-terminus: Pumilio homolog 2 (1173 aa).

Disordered stretches follow at residues 41-68 (VSSA…PLSG), 265-296 (VSKL…ASPT), 480-518 (QQAA…ESLA), 592-662 (LTGA…SLGF), and 730-759 (PISM…SSSL). The segment covering 287–296 (TPGSRQASPT) has biased composition (polar residues). Residues 480–492 (QQAATQASQGQQQ) show a composition bias toward low complexity. Polar residues predominate over residues 493–518 (VMRATSNQRPLTPNQAQQGQQPESLA). Residues 606-622 (QQQQQQQQQQHQQQQQQ) show a composition bias toward low complexity. Polar residues predominate over residues 623-633 (PNANLHSNSFY). A compositionally biased stretch (low complexity) spans 634-657 (GNSTMSNNSQSSSLFSPGPGQPGS). Positions 815–1155 (GRSRLLEDFR…HILAKLEKYY (341 aa)) constitute a PUM-HD domain. 9 Pumilio repeats span residues 835–870 (DLMG…LVFS), 871–906 (EILQ…ALAT), 907–942 (RIRG…EMVR), 943–978 (ELDG…FIIE), 979–1014 (AFKG…PILE), 1015–1050 (ELHQ…KIVC), 1051–1086 (EVRG…FLID), 1087–1129 (EICC…IIMH), and 1130–1167 (KIRP…LLVG). The interval 850–854 (SRFIQ) is adenine-nucleotide binding in RNA target. The tract at residues 886 to 890 (NYVIQ) is uracil-nucleotide binding in RNA target. The interval 922-926 (CRVIQ) is adenine-nucleotide binding in RNA target. The non-specific-nucleotide binding in RNA target stretch occupies residues 958–962 (NHVVQ). The tract at residues 994–998 (CRVIQ) is adenine-nucleotide binding in RNA target. A uracil-nucleotide binding in RNA target region spans residues 1030–1034 (NYVIQ). The guanine-nucleotide binding in RNA target stretch occupies residues 1066–1070 (SNVVE). The interval 1109-1113 (NYVVQ) is uracil-nucleotide binding in RNA target.

In terms of assembly, component of a complex with papd4, sympk, tacc3, parn, dazl and cpeb1. In terms of processing, phosphorylated.

It is found in the cytoplasm. Its subcellular location is the P-body. The protein localises to the cytoplasmic granule. Its function is as follows. Sequence-specific RNA-binding protein that acts as a post-transcriptional repressor by binding the 3'-UTR of mRNA targets. Binds to an RNA consensus sequence, the Pumilio Response Element (PRE), 5'-UGUANAUA-3', that is related to the Nanos Response Element (NRE). Mediates post-transcriptional repression of transcripts via different mechanisms: acts via direct recruitment of deadenylase complexes leading to translational inhibition and mRNA degradation. Also mediates deadenylation-independent repression by promoting accessibility of miRNAs. This is Pumilio homolog 2 (pum2) from Xenopus laevis (African clawed frog).